The following is a 508-amino-acid chain: Light-independent protochlorophyllide reductase subunit B (508 aa).

[4Fe-4S] cluster is bound at residue Asp-36. The Proton donor role is filled by Asp-294. 429–430 provides a ligand contact to substrate; it reads GM.

Belongs to the ChlB/BchB/BchZ family. As to quaternary structure, protochlorophyllide reductase is composed of three subunits; ChlL, ChlN and ChlB. Forms a heterotetramer of two ChlB and two ChlN subunits. It depends on [4Fe-4S] cluster as a cofactor.

The enzyme catalyses chlorophyllide a + oxidized 2[4Fe-4S]-[ferredoxin] + 2 ADP + 2 phosphate = protochlorophyllide a + reduced 2[4Fe-4S]-[ferredoxin] + 2 ATP + 2 H2O. The protein operates within porphyrin-containing compound metabolism; chlorophyll biosynthesis (light-independent). Component of the dark-operative protochlorophyllide reductase (DPOR) that uses Mg-ATP and reduced ferredoxin to reduce ring D of protochlorophyllide (Pchlide) to form chlorophyllide a (Chlide). This reaction is light-independent. The NB-protein (ChlN-ChlB) is the catalytic component of the complex. This is Light-independent protochlorophyllide reductase subunit B from Trichormus variabilis (strain ATCC 29413 / PCC 7937) (Anabaena variabilis).